Reading from the N-terminus, the 314-residue chain is Formate-nitrite transporter (314 aa).

Topologically, residues 1-47 (MSKGKSKYVIDPISVKTACTSEESYIRCVEYGKGKAHYPNLSLLAKA) are cytoplasmic. The helical transmembrane segment at 48–68 (ILAGVFVGVCAHASGIAGGHF) threads the bilayer. The Extracellular segment spans residues 69-78 (YYHKLREYVG). Residues 79–99 (ISMSAFVYGFTFPIAFLCIIA) traverse the membrane as a helical segment. Residues 100-128 (TGSDLFTGNTLAVTTALLQRKVSLLQYLR) lie on the Cytoplasmic side of the membrane. Residues 129–149 (VMSISLFGNYLGAVSFAFFVS) form a helical membrane-spanning segment. Over 150–185 (HLSGAYEKHTDVTKNHIFQFLNDIAEKKISHTFIQC) the chain is Extracellular. Residues 186 to 206 (ICLAIGCNIFVCLAVYFVLTI) traverse the membrane as a helical segment. Topologically, residues 207-211 (KDGSG) are cytoplasmic. A helical membrane pass occupies residues 212 to 232 (MVFSVFFAVYAFAIAGYEHII). Over 233-257 (ANMYTLNLALMVEAKVTWSKVYFHN) the chain is Extracellular. A helical membrane pass occupies residues 258–278 (LLPTLIGNYIAGALVLACPLF). Topologically, residues 279-314 (YIYRNSYRDYERTRGDGSNCGLRSLSIEMQNGSNGN) are cytoplasmic.

Belongs to the FNT transporter (TC 1.A.16) family. Homopentamer.

Its subcellular location is the cell membrane. It is found in the vacuole membrane. The enzyme catalyses (S)-lactate(in) + H(+)(in) = (S)-lactate(out) + H(+)(out). The catalysed reaction is formate(in) + H(+)(in) = formate(out) + H(+)(out). It catalyses the reaction pyruvate(out) + H(+)(out) = pyruvate(in) + H(+)(in). It carries out the reaction acetate(out) + H(+)(out) = acetate(in) + H(+)(in). Its activity is regulated as follows. Inhibited by the Malaria Box compound MMV007839 and its derivatives BH296 and BH267.meta. Functionally, monocarboxylate-proton symporter that mediates the efflux of the waste product lactate in the intraerythrocytic parasites; active in acidic-to-neutral pH range. Transports L-lactate. The protein is Formate-nitrite transporter of Plasmodium knowlesi (strain H).